Consider the following 547-residue polypeptide: Tripartite motif-containing protein 5 (547 aa).

Position 2 is an N-acetylalanine (Ala-2). The segment at 15–59 (CPICLELLTEPLSLDCGHSFCQACITANHKESTLHQGERSCPLCR) adopts an RING-type zinc-finger fold. At Ser-86 the chain carries Phosphoserine. The B box-type zinc finger occupies 91–132 (QKVDRCARHGEKLLLFCQQHGNVICWLCERSQEHRGHSTFLV). 4 residues coordinate Zn(2+): Cys-96, His-99, Cys-118, and His-124. Positions 132-225 (VEEVAQKYQE…AQSENDMVLQ (94 aa)) form a coiled coil. The interval 186-199 (FKQLRDILDCEESN) is required for interaction with GABARAP and for autophagy. Residues 280–547 (PDLKGMLQVF…LPMTLCSPSS (268 aa)) enclose the B30.2/SPRY domain.

The protein belongs to the TRIM/RBCC family. Can form homodimers and homotrimers. In addition to lower-order dimerization, also exhibits a higher-order multimerization and both low- and high-order multimerizations are essential for its restriction activity. Interacts with BTBD1 and BTBD2. Interacts with PSMC4, PSMC5, PSMD7 and HSPA8/HSC70. Interacts (via B30.2/SPRY domain) with HSPA1A/B. Interacts with PSMC2, MAP3K7/TAK1, TAB2 and TAB3. Interacts with SQSTM1. Interacts with TRIM6 and TRIM34. Interacts with ULK1 (phosphorylated form), GABARAP, GABARAPL1, GABARAPL2, MAP1LC3A, MAP1LC3C and BECN1. Post-translationally, degraded in a proteasome-independent fashion in the absence of viral infection but in a proteasome-dependent fashion following exposure to restriction sensitive virus. Autoubiquitinated in a RING finger- and UBE2D2-dependent manner. Monoubiquitinated by TRIM21. Deubiquitinated by Yersinia YopJ. Ubiquitination may not lead to proteasomal degradation.

The protein resides in the cytoplasm. It is found in the nucleus. The enzyme catalyses S-ubiquitinyl-[E2 ubiquitin-conjugating enzyme]-L-cysteine + [acceptor protein]-L-lysine = [E2 ubiquitin-conjugating enzyme]-L-cysteine + N(6)-ubiquitinyl-[acceptor protein]-L-lysine.. It functions in the pathway protein modification; protein ubiquitination. Capsid-specific restriction factor that prevents infection from non-host-adapted retroviruses. Blocks viral replication early in the life cycle, after viral entry but before reverse transcription. In addition to acting as a capsid-specific restriction factor, also acts as a pattern recognition receptor that activates innate immune signaling in response to the retroviral capsid lattice. Binding to the viral capsid triggers its E3 ubiquitin ligase activity, and in concert with the heterodimeric ubiquitin conjugating enzyme complex UBE2V1-UBE2N (also known as UBC13-UEV1A complex) generates 'Lys-63'-linked polyubiquitin chains, which in turn are catalysts in the autophosphorylation of the MAP3K7/TAK1 complex (includes TAK1, TAB2, and TAB3). Activation of the MAP3K7/TAK1 complex by autophosphorylation results in the induction and expression of NF-kappa-B and MAPK-responsive inflammatory genes, thereby leading to an innate immune response in the infected cell. Plays a role in regulating autophagy through activation of autophagy regulator BECN1 by causing its dissociation from its inhibitors BCL2 and TAB2. The chain is Tripartite motif-containing protein 5 (TRIM5) from Ateles geoffroyi (Black-handed spider monkey).